The chain runs to 334 residues: Serine/threonine-protein kinase (334 aa).

The region spanning F53–T333 is the Protein kinase domain. Residues L59 to V67 and K82 each bind ATP. Residue D167 is the Proton acceptor of the active site.

It belongs to the protein kinase superfamily. Ser/Thr protein kinase family.

The enzyme catalyses L-seryl-[protein] + ATP = O-phospho-L-seryl-[protein] + ADP + H(+). The catalysed reaction is L-threonyl-[protein] + ATP = O-phospho-L-threonyl-[protein] + ADP + H(+). In terms of biological role, able to phosphorylate in vitro the major virion phosphoprotein phosphorylated in vivo. The protein is Serine/threonine-protein kinase (PK) of Sus scrofa (Pig).